Here is a 454-residue protein sequence, read N- to C-terminus: tRNA modification GTPase MnmE (454 aa).

(6S)-5-formyl-5,6,7,8-tetrahydrofolate-binding residues include Arg23, Glu80, and Lys120. The region spanning 216 to 377 is the TrmE-type G domain; that stretch reads GMKVVIAGRP…LRNHLKQSMG (162 aa). Asn226 provides a ligand contact to K(+). GTP is bound by residues 226–231, 245–251, 270–273, 335–338, and 358–360; these read NAGKSS, TDIAGTT, DTAG, NKAD, and SAR. A Mg(2+)-binding site is contributed by Ser230. Positions 245, 247, and 250 each coordinate K(+). Thr251 provides a ligand contact to Mg(2+). Lys454 contacts (6S)-5-formyl-5,6,7,8-tetrahydrofolate.

The protein belongs to the TRAFAC class TrmE-Era-EngA-EngB-Septin-like GTPase superfamily. TrmE GTPase family. In terms of assembly, homodimer. Heterotetramer of two MnmE and two MnmG subunits. K(+) serves as cofactor.

The protein resides in the cytoplasm. Its function is as follows. Exhibits a very high intrinsic GTPase hydrolysis rate. Involved in the addition of a carboxymethylaminomethyl (cmnm) group at the wobble position (U34) of certain tRNAs, forming tRNA-cmnm(5)s(2)U34. This is tRNA modification GTPase MnmE from Salmonella paratyphi C (strain RKS4594).